The sequence spans 238 residues: Ribitol-5-phosphate cytidylyltransferase 1 (238 aa).

Residues 7-10 (LAGG) and 81-87 (GSDRNDT) each bind CTP.

Belongs to the IspD/TarI cytidylyltransferase family. TarI subfamily.

The catalysed reaction is D-ribitol 5-phosphate + CTP + H(+) = CDP-L-ribitol + diphosphate. Its pathway is cell wall biogenesis; poly(ribitol phosphate) teichoic acid biosynthesis. In terms of biological role, catalyzes the transfer of the cytidylyl group of CTP to D-ribitol 5-phosphate. The protein is Ribitol-5-phosphate cytidylyltransferase 1 of Staphylococcus aureus (strain USA300).